Reading from the N-terminus, the 99-residue chain is Small ribosomal subunit protein uS19 (99 aa).

The interval 77–99 (TRTFHGHSGDKKAKVAKGGPGGR) is disordered.

This sequence belongs to the universal ribosomal protein uS19 family.

Its function is as follows. Protein S19 forms a complex with S13 that binds strongly to the 16S ribosomal RNA. This chain is Small ribosomal subunit protein uS19, found in Sorangium cellulosum (strain So ce56) (Polyangium cellulosum (strain So ce56)).